The chain runs to 303 residues: Probable 5-dehydro-4-deoxyglucarate dehydratase (303 aa).

This sequence belongs to the DapA family.

It carries out the reaction 5-dehydro-4-deoxy-D-glucarate + H(+) = 2,5-dioxopentanoate + CO2 + H2O. It participates in carbohydrate acid metabolism; D-glucarate degradation; 2,5-dioxopentanoate from D-glucarate: step 2/2. This Acinetobacter baylyi (strain ATCC 33305 / BD413 / ADP1) protein is Probable 5-dehydro-4-deoxyglucarate dehydratase.